The primary structure comprises 199 residues: Protein Maeo_0138 (199 aa).

In terms of domain architecture, AMMECR1 spans 7 to 197; it reads EEGKFAVKFA…ELSPNGKIVE (191 aa).

This chain is Protein Maeo_0138, found in Methanococcus aeolicus (strain ATCC BAA-1280 / DSM 17508 / OCM 812 / Nankai-3).